We begin with the raw amino-acid sequence, 459 residues long: Chromosomal replication initiator protein DnaA (459 aa).

A domain I, interacts with DnaA modulators region spans residues 1 to 90; sequence MAVSLWQQCI…RPASKPAAPA (90 aa). Positions 75–124 are disordered; it reads RFDIGSRPASKPAAPAASTKSPVAPAAKSPSKPSFNSNEPAATANHRSNM. Residues 80–108 are compositionally biased toward low complexity; that stretch reads SRPASKPAAPAASTKSPVAPAAKSPSKPS. Residues 91 to 122 form a domain II region; it reads ASTKSPVAPAAKSPSKPSFNSNEPAATANHRS. Residues 109-124 are compositionally biased toward polar residues; it reads FNSNEPAATANHRSNM. Residues 123–339 form a domain III, AAA+ region region; sequence NMNPTYQFDN…GALNRVIANA (217 aa). Residues glycine 167, glycine 169, lysine 170, and threonine 171 each coordinate ATP. The tract at residues 340–459 is domain IV, binds dsDNA; sequence NFTGRPITID…YANLIRTLSS (120 aa).

This sequence belongs to the DnaA family. In terms of assembly, oligomerizes as a right-handed, spiral filament on DNA at oriC.

It is found in the cytoplasm. In terms of biological role, plays an essential role in the initiation and regulation of chromosomal replication. ATP-DnaA binds to the origin of replication (oriC) to initiate formation of the DNA replication initiation complex once per cell cycle. Binds the DnaA box (a 9 base pair repeat at the origin) and separates the double-stranded (ds)DNA. Forms a right-handed helical filament on oriC DNA; dsDNA binds to the exterior of the filament while single-stranded (ss)DNA is stabiized in the filament's interior. The ATP-DnaA-oriC complex binds and stabilizes one strand of the AT-rich DNA unwinding element (DUE), permitting loading of DNA polymerase. After initiation quickly degrades to an ADP-DnaA complex that is not apt for DNA replication. Binds acidic phospholipids. The polypeptide is Chromosomal replication initiator protein DnaA (Shewanella loihica (strain ATCC BAA-1088 / PV-4)).